We begin with the raw amino-acid sequence, 253 residues long: Adenylate kinase (253 aa).

15 to 20 (GSGKGT) provides a ligand contact to ATP. Residues 35–64 (SSGDLLRNAVSQNTPLGQEIKSYLDQGKLL) are NMP. Residues S36, R41, 62–64 (KLL), 103–106 (GFPR), and Q110 each bind AMP. Residues 143–176 (SRYICPSCQGIYNKQQGFSRCPKCLVELTRRSDD) are LID. Position 144 (R144) interacts with ATP. The Zn(2+) site is built by C147 and C150. 153 to 154 (IY) is an ATP binding site. C163 and C166 together coordinate Zn(2+). AMP-binding residues include R173 and R184. A212 contributes to the ATP binding site.

It belongs to the adenylate kinase family. Monomer.

The protein localises to the cytoplasm. The enzyme catalyses AMP + ATP = 2 ADP. The protein operates within purine metabolism; AMP biosynthesis via salvage pathway; AMP from ADP: step 1/1. Functionally, catalyzes the reversible transfer of the terminal phosphate group between ATP and AMP. Plays an important role in cellular energy homeostasis and in adenine nucleotide metabolism. This Chlamydia muridarum (strain MoPn / Nigg) protein is Adenylate kinase.